Here is a 340-residue protein sequence, read N- to C-terminus: 7,8-didemethyl-8-hydroxy-5-deazariboflavin synthase (340 aa).

The 232-residue stretch at 25–256 folds into the Radical SAM core domain; it reads ATYSPAYTIV…SDITIQIPPN (232 aa). Residues Cys39, Cys43, and Cys46 each contribute to the [4Fe-4S] cluster site.

The protein belongs to the radical SAM superfamily. CofG family. Consists of two subunits, CofG and CofH. Requires [4Fe-4S] cluster as cofactor.

The catalysed reaction is 5-amino-5-(4-hydroxybenzyl)-6-(D-ribitylimino)-5,6-dihydrouracil + S-adenosyl-L-methionine = 7,8-didemethyl-8-hydroxy-5-deazariboflavin + 5'-deoxyadenosine + L-methionine + NH4(+) + H(+). It functions in the pathway cofactor biosynthesis; coenzyme F0 biosynthesis. Functionally, catalyzes the radical-mediated synthesis of 7,8-didemethyl-8-hydroxy-5-deazariboflavin from 5-amino-5-(4-hydroxybenzyl)-6-(D-ribitylimino)-5,6-dihydrouracil. The sequence is that of 7,8-didemethyl-8-hydroxy-5-deazariboflavin synthase from Trichormus variabilis (strain ATCC 29413 / PCC 7937) (Anabaena variabilis).